The primary structure comprises 305 residues: tRNA uridine(34) hydroxylase (305 aa).

The Rhodanese domain maps to 126 to 220 (CDPEVTVIDT…YLEEVPAQES (95 aa)). The active-site Cysteine persulfide intermediate is Cys180.

Belongs to the TrhO family.

It catalyses the reaction uridine(34) in tRNA + AH2 + O2 = 5-hydroxyuridine(34) in tRNA + A + H2O. Its function is as follows. Catalyzes oxygen-dependent 5-hydroxyuridine (ho5U) modification at position 34 in tRNAs. This is tRNA uridine(34) hydroxylase from Nostoc punctiforme (strain ATCC 29133 / PCC 73102).